Reading from the N-terminus, the 450-residue chain is Mitochondrial distribution and morphology protein 10 (450 aa).

Belongs to the MDM10 family. In terms of assembly, component of the ER-mitochondria encounter structure (ERMES) or MDM complex, composed of MMM1, MDM10, MDM12 and MDM34. Associates with the mitochondrial outer membrane sorting assembly machinery SAM(core) complex.

It localises to the mitochondrion outer membrane. Component of the ERMES/MDM complex, which serves as a molecular tether to connect the endoplasmic reticulum and mitochondria. Components of this complex are involved in the control of mitochondrial shape and protein biogenesis and may function in phospholipid exchange. MDM10 is involved in the late assembly steps of the general translocase of the mitochondrial outer membrane (TOM complex). Functions in the TOM40-specific route of the assembly of outer membrane beta-barrel proteins, including the association of TOM40 with the receptor TOM22 and small TOM proteins. Can associate with the SAM(core) complex as well as the MDM12-MMM1 complex, both involved in late steps of the major beta-barrel assembly pathway, that is responsible for biogenesis of all outer membrane beta-barrel proteins. May act as a switch that shuttles between both complexes and channels precursor proteins into the TOM40-specific pathway. Plays a role in mitochondrial morphology and in the inheritance of mitochondria. This is Mitochondrial distribution and morphology protein 10 from Paracoccidioides lutzii (strain ATCC MYA-826 / Pb01) (Paracoccidioides brasiliensis).